The following is a 259-amino-acid chain: Isoprenyl transferase (259 aa).

D33 is a catalytic residue. Mg(2+) is bound at residue D33. Substrate is bound by residues 34-37 (GNRR), W38, H51, and 79-81 (STE). The active-site Proton acceptor is N82. Residues R86, R208, and 214–216 (RMS) each bind substrate. E227 is a Mg(2+) binding site.

This sequence belongs to the UPP synthase family. In terms of assembly, homodimer. Mg(2+) is required as a cofactor.

Catalyzes the condensation of isopentenyl diphosphate (IPP) with allylic pyrophosphates generating different type of terpenoids. This is Isoprenyl transferase from Streptomyces fradiae (Streptomyces roseoflavus).